We begin with the raw amino-acid sequence, 478 residues long: Lysosome membrane protein 2 (478 aa).

Over Met1–Cys4 the chain is Cytoplasmic. A helical transmembrane segment spans residues Cys5–Arg27. The Lumenal segment spans residues Val28–Leu433. Asn45, Asn68, Asn105, and Asn122 each carry an N-linked (GlcNAc...) asparagine glycan. The segment at Leu155–Phe191 is important for interaction with GBA1. N-linked (GlcNAc...) asparagine glycans are attached at residues Asn206, Asn224, Asn249, and Asn304. 2 disulfide bridges follow: Cys274–Cys329 and Cys312–Cys318. N-linked (GlcNAc...) asparagine glycans are attached at residues Asn325, Asn412, and Asn430. A helical transmembrane segment spans residues Val434 to Arg459. Over Gly460–Thr478 the chain is Cytoplasmic.

This sequence belongs to the CD36 family. In terms of assembly, interacts with GBA1. In terms of processing, acylated by palmitic acid group(s). Post-translationally, heavily glycosylated. As to expression, detected in the extracts of brain, heart, lung, liver and kidney.

It is found in the lysosome membrane. Acts as a lysosomal receptor for glucosylceramidase (GBA1) targeting. The polypeptide is Lysosome membrane protein 2 (Scarb2) (Mus musculus (Mouse)).